The sequence spans 67 residues: MARITVEDCLEQIPNRFQLVLAATYRARMLSQGHAPKVDCKNKPAVTALREIAAGKIGLEMLKKVPL.

The protein belongs to the RNA polymerase subunit omega family. The RNAP catalytic core consists of 2 alpha, 1 beta, 1 beta' and 1 omega subunit. When a sigma factor is associated with the core the holoenzyme is formed, which can initiate transcription.

The catalysed reaction is RNA(n) + a ribonucleoside 5'-triphosphate = RNA(n+1) + diphosphate. In terms of biological role, promotes RNA polymerase assembly. Latches the N- and C-terminal regions of the beta' subunit thereby facilitating its interaction with the beta and alpha subunits. This Albidiferax ferrireducens (strain ATCC BAA-621 / DSM 15236 / T118) (Rhodoferax ferrireducens) protein is DNA-directed RNA polymerase subunit omega.